A 368-amino-acid chain; its full sequence is Mitogen-activated protein kinase HOG1B (368 aa).

The Protein kinase domain maps to 20–299; that stretch reads YVNLEPVGMG…ASQALAHPYL (280 aa). ATP contacts are provided by residues 26–34 and Lys-49; that span reads VGMGAFGLV. Residue Asp-141 is the Proton acceptor of the active site. The residue at position 171 (Thr-171) is a Phosphothreonine. The TXY motif lies at 171-173; it reads TGY. The residue at position 173 (Tyr-173) is a Phosphotyrosine.

It belongs to the protein kinase superfamily. Ser/Thr protein kinase family. MAP kinase subfamily. HOG1 sub-subfamily. It depends on Mg(2+) as a cofactor. Post-translationally, phosphorylated. Dually phosphorylated on Thr-171 and Tyr-173, which activates the enzyme. Rapidly dephosphorylated upon either hypo- or hyperosmotic shock.

The protein resides in the cytoplasm. Its subcellular location is the nucleus. The enzyme catalyses L-seryl-[protein] + ATP = O-phospho-L-seryl-[protein] + ADP + H(+). The catalysed reaction is L-threonyl-[protein] + ATP = O-phospho-L-threonyl-[protein] + ADP + H(+). Activated by tyrosine and threonine phosphorylation. In terms of biological role, mitogen-activated protein kinase involved in a signal transduction pathway that is activated by changes in the osmolarity of the extracellular environment. Controls osmotic regulation of transcription of target genes. This chain is Mitogen-activated protein kinase HOG1B (HOG1B), found in Wallemia ichthyophaga (strain EXF-994 / CBS 113033).